Here is a 460-residue protein sequence, read N- to C-terminus: Elongation factor 1-alpha-B (460 aa).

G2 bears the N,N,N-trimethylglycine mark. K3 bears the N6,N6-dimethyllysine; alternate mark. An N6-methyllysine; alternate modification is found at K3. The region spanning K5–T240 is the tr-type G domain. The segment at G14–S21 is G1. Position 14 to 21 (G14 to S21) interacts with GTP. At K30 the chain carries N6-methyllysine. The interval G70–D74 is G2. Residue K79 is modified to N6,N6,N6-trimethyllysine. The tract at residues D91–G94 is G3. Residues D91–H95 and N153–D156 each bind GTP. The interval N153–D156 is G4. The segment at S192 to F194 is G5. The residue at position 316 (K316) is an N6,N6-dimethyllysine; alternate. At K316 the chain carries N6-methyllysine; alternate. At K390 the chain carries N6-methyllysine.

It belongs to the TRAFAC class translation factor GTPase superfamily. Classic translation factor GTPase family. EF-Tu/EF-1A subfamily.

It is found in the cytoplasm. This protein promotes the GTP-dependent binding of aminoacyl-tRNA to the A-site of ribosomes during protein biosynthesis. The chain is Elongation factor 1-alpha-B (tef102) from Schizosaccharomyces pombe (strain 972 / ATCC 24843) (Fission yeast).